Reading from the N-terminus, the 608-residue chain is 2',5'-phosphodiesterase 12 (608 aa).

The transit peptide at 1 to 16 (MWRLPGRAALRGVRSV) directs the protein to the mitochondrion. The interval 91-111 (AKKSRKNRAHSSGGAACAATG) is disordered. Residues 100 to 111 (HSSGGAACAATG) are compositionally biased toward low complexity. S216 carries the post-translational modification Phosphoserine. Residues E350, D495, and N497 each contribute to the Mg(2+) site. The active-site Proton donor/acceptor is the D495.

This sequence belongs to the CCR4/nocturin family. The cofactor is Mg(2+).

The protein localises to the mitochondrion matrix. The catalysed reaction is Exonucleolytic cleavage of poly(A) to 5'-AMP.. Enzyme that cleaves 2',5'-phosphodiester bond linking adenosines of the 5'-triphosphorylated oligoadenylates, triphosphorylated oligoadenylates referred as 2-5A modulates the 2-5A system. Degrades triphosphorylated 2-5A to produce AMP and ATP. Also cleaves 3',5'-phosphodiester bond of oligoadenylates. Plays a role as a negative regulator of the 2-5A system that is one of the major pathways for antiviral and antitumor functions induced by interferons (IFNs). Suppression of this enzyme increases cellular 2-5A levels and decreases viral replication in cultured small-airway epithelial cells. This chain is 2',5'-phosphodiesterase 12 (Pde12), found in Rattus norvegicus (Rat).